Consider the following 271-residue polypeptide: Ribosomal RNA small subunit methyltransferase A (271 aa).

Positions 11, 13, 38, 58, 86, and 101 each coordinate S-adenosyl-L-methionine.

The protein belongs to the class I-like SAM-binding methyltransferase superfamily. rRNA adenine N(6)-methyltransferase family. RsmA subfamily.

It localises to the cytoplasm. The enzyme catalyses adenosine(1518)/adenosine(1519) in 16S rRNA + 4 S-adenosyl-L-methionine = N(6)-dimethyladenosine(1518)/N(6)-dimethyladenosine(1519) in 16S rRNA + 4 S-adenosyl-L-homocysteine + 4 H(+). Functionally, specifically dimethylates two adjacent adenosines (A1518 and A1519) in the loop of a conserved hairpin near the 3'-end of 16S rRNA in the 30S particle. May play a critical role in biogenesis of 30S subunits. In Helicobacter pylori (strain P12), this protein is Ribosomal RNA small subunit methyltransferase A.